The sequence spans 559 residues: Dihydroxy-acid dehydratase (559 aa).

Aspartate 81 serves as a coordination point for Mg(2+). Residue cysteine 122 coordinates [2Fe-2S] cluster. Positions 123 and 124 each coordinate Mg(2+). Lysine 124 is subject to N6-carboxylysine. Position 195 (cysteine 195) interacts with [2Fe-2S] cluster. Glutamate 448 serves as a coordination point for Mg(2+). The active-site Proton acceptor is serine 474.

The protein belongs to the IlvD/Edd family. In terms of assembly, homodimer. [2Fe-2S] cluster serves as cofactor. It depends on Mg(2+) as a cofactor.

It carries out the reaction (2R)-2,3-dihydroxy-3-methylbutanoate = 3-methyl-2-oxobutanoate + H2O. The enzyme catalyses (2R,3R)-2,3-dihydroxy-3-methylpentanoate = (S)-3-methyl-2-oxopentanoate + H2O. Its pathway is amino-acid biosynthesis; L-isoleucine biosynthesis; L-isoleucine from 2-oxobutanoate: step 3/4. The protein operates within amino-acid biosynthesis; L-valine biosynthesis; L-valine from pyruvate: step 3/4. Functionally, functions in the biosynthesis of branched-chain amino acids. Catalyzes the dehydration of (2R,3R)-2,3-dihydroxy-3-methylpentanoate (2,3-dihydroxy-3-methylvalerate) into 2-oxo-3-methylpentanoate (2-oxo-3-methylvalerate) and of (2R)-2,3-dihydroxy-3-methylbutanoate (2,3-dihydroxyisovalerate) into 2-oxo-3-methylbutanoate (2-oxoisovalerate), the penultimate precursor to L-isoleucine and L-valine, respectively. In Geobacillus kaustophilus (strain HTA426), this protein is Dihydroxy-acid dehydratase.